The chain runs to 129 residues: NADH-quinone oxidoreductase subunit A (129 aa).

3 consecutive transmembrane segments (helical) span residues Leu-14–Trp-34, Phe-67–Ala-87, and Trp-95–Leu-115.

This sequence belongs to the complex I subunit 3 family. NDH-1 is composed of 14 different subunits. Subunits NuoA, H, J, K, L, M, N constitute the membrane sector of the complex.

The protein localises to the cell inner membrane. The enzyme catalyses a quinone + NADH + 5 H(+)(in) = a quinol + NAD(+) + 4 H(+)(out). Functionally, NDH-1 shuttles electrons from NADH, via FMN and iron-sulfur (Fe-S) centers, to quinones in the respiratory chain. The immediate electron acceptor for the enzyme in this species is believed to be ubiquinone. Couples the redox reaction to proton translocation (for every two electrons transferred, four hydrogen ions are translocated across the cytoplasmic membrane), and thus conserves the redox energy in a proton gradient. This Rhodopseudomonas palustris (strain ATCC BAA-98 / CGA009) protein is NADH-quinone oxidoreductase subunit A.